The following is a 265-amino-acid chain: Pancreas transcription factor 1 subunit alpha (265 aa).

Residues 115 to 167 (QLRQAANVRERRRMQSINDAFEGLRSHIPTLPYEKRLSKVDTLRLAIGYINFL) form the bHLH domain.

It is found in the nucleus. Its function is as follows. Transcription factor implicated in the cell fate determination in various organs. Binds to the E-box consensus sequence 5'-CANNTG-3'. Required for exocrine pancreatic development. Plays a central role in directing the differentiation of retinal progenitors towards horizontal and amacrine fates. In Danio rerio (Zebrafish), this protein is Pancreas transcription factor 1 subunit alpha (ptf1a).